Reading from the N-terminus, the 302-residue chain is Serine/threonine-protein phosphatase alpha-3 isoform (302 aa).

Residues Asp-62, His-64, Asp-90, and Asn-122 each contribute to the Mn(2+) site. The Proton donor role is filled by His-123. His-171 and His-246 together coordinate Mn(2+).

This sequence belongs to the PPP phosphatase family. PP-1 subfamily. Interacts with Nop17l. Requires Mn(2+) as cofactor.

It catalyses the reaction O-phospho-L-seryl-[protein] + H2O = L-seryl-[protein] + phosphate. The catalysed reaction is O-phospho-L-threonyl-[protein] + H2O = L-threonyl-[protein] + phosphate. This is Serine/threonine-protein phosphatase alpha-3 isoform (Pp1-13C) from Drosophila melanogaster (Fruit fly).